A 368-amino-acid chain; its full sequence is Nuclease EXOG, mitochondrial (368 aa).

The N-terminal 41 residues, 1–41 (MAIKSIASRLRGSRRFLSGFVAGAVVGAAGAGLAALQFFRS), are a transit peptide targeting the mitochondrion. The active-site Proton acceptor is His140. Residue Asn171 participates in a divalent metal cation binding.

Belongs to the DNA/RNA non-specific endonuclease family. Homodimer. Requires a divalent metal cation as cofactor. In terms of tissue distribution, ubiquitous.

Its subcellular location is the mitochondrion inner membrane. Its function is as follows. Endo/exonuclease with nicking activity towards supercoiled DNA, a preference for single-stranded DNA and 5'-3' exonuclease activity. The polypeptide is Nuclease EXOG, mitochondrial (EXOG) (Homo sapiens (Human)).